Here is a 104-residue protein sequence, read N- to C-terminus: Enhancer of rudimentary homolog (104 aa).

It belongs to the E(R) family. In terms of assembly, homodimer.

The protein resides in the nucleus. Its function is as follows. May have a role in the cell cycle. This Danio rerio (Zebrafish) protein is Enhancer of rudimentary homolog (erh).